The sequence spans 428 residues: Elongation factor 1-alpha (428 aa).

One can recognise a tr-type G domain in the interval 5 to 217 (KPHVNIVFIG…DQIPEPEKPV (213 aa)). The G1 stretch occupies residues 14-21 (GHVDHGKS). 14 to 21 (GHVDHGKS) contributes to the GTP binding site. Ser21 contributes to the Mg(2+) binding site. Residues 68–72 (GITID) form a G2 region. A G3 region spans residues 89 to 92 (DAPG). GTP contacts are provided by residues 89–93 (DAPGH) and 144–147 (NKMD). The segment at 144–147 (NKMD) is G4. Residues 181 to 183 (SAW) are G5.

This sequence belongs to the TRAFAC class translation factor GTPase superfamily. Classic translation factor GTPase family. EF-Tu/EF-1A subfamily.

The protein resides in the cytoplasm. The enzyme catalyses GTP + H2O = GDP + phosphate + H(+). GTP hydrolase that promotes the GTP-dependent binding of aminoacyl-tRNA to the A-site of ribosomes during protein biosynthesis. This chain is Elongation factor 1-alpha, found in Pyrococcus furiosus (strain ATCC 43587 / DSM 3638 / JCM 8422 / Vc1).